The following is a 627-amino-acid chain: Asparagine synthetase domain-containing protein 1 (627 aa).

The active-site For GATase activity is Cys2. A Glutamine amidotransferase type-2 domain is found at 2 to 184 (CGICCSVSFS…ASGIFQIDLN (183 aa)). Residues 308–597 (ASKEVLKTCS…GLPASALLPK (290 aa)) enclose the Asparagine synthetase domain. Residues 373-404 (QQNHHEIPSEESSQSPAADEGPGEAEVPDRVT) form a disordered region.

This is Asparagine synthetase domain-containing protein 1 (Asnsd1) from Mus musculus (Mouse).